A 458-amino-acid chain; its full sequence is Bifunctional protein GlmU (458 aa).

The interval 1-229 (MNKFAIVLAA…FDESLGVNDR (229 aa)) is pyrophosphorylase. Residues 8 to 11 (LAAG), Lys-22, Gln-72, and 77 to 78 (GT) contribute to the UDP-N-acetyl-alpha-D-glucosamine site. Mg(2+) is bound at residue Asp-102. UDP-N-acetyl-alpha-D-glucosamine is bound by residues Gly-139, Glu-154, Asn-169, and Asn-227. Asn-227 serves as a coordination point for Mg(2+). The interval 230–250 (VALSQAEGTMRKRINHEHMVN) is linker. Residues 251-458 (GVTLIDPATT…AKKMPHYRGQ (208 aa)) form an N-acetyltransferase region. Residues Arg-332 and Lys-350 each contribute to the UDP-N-acetyl-alpha-D-glucosamine site. His-362 functions as the Proton acceptor in the catalytic mechanism. UDP-N-acetyl-alpha-D-glucosamine-binding residues include Tyr-365 and Asn-376. 4 residues coordinate acetyl-CoA: Ala-379, Ser-404, Ala-422, and Arg-439.

The protein in the N-terminal section; belongs to the N-acetylglucosamine-1-phosphate uridyltransferase family. In the C-terminal section; belongs to the transferase hexapeptide repeat family. Homotrimer. Mg(2+) serves as cofactor.

It localises to the cytoplasm. It catalyses the reaction alpha-D-glucosamine 1-phosphate + acetyl-CoA = N-acetyl-alpha-D-glucosamine 1-phosphate + CoA + H(+). The enzyme catalyses N-acetyl-alpha-D-glucosamine 1-phosphate + UTP + H(+) = UDP-N-acetyl-alpha-D-glucosamine + diphosphate. The protein operates within nucleotide-sugar biosynthesis; UDP-N-acetyl-alpha-D-glucosamine biosynthesis; N-acetyl-alpha-D-glucosamine 1-phosphate from alpha-D-glucosamine 6-phosphate (route II): step 2/2. Its pathway is nucleotide-sugar biosynthesis; UDP-N-acetyl-alpha-D-glucosamine biosynthesis; UDP-N-acetyl-alpha-D-glucosamine from N-acetyl-alpha-D-glucosamine 1-phosphate: step 1/1. It functions in the pathway bacterial outer membrane biogenesis; LPS lipid A biosynthesis. In terms of biological role, catalyzes the last two sequential reactions in the de novo biosynthetic pathway for UDP-N-acetylglucosamine (UDP-GlcNAc). The C-terminal domain catalyzes the transfer of acetyl group from acetyl coenzyme A to glucosamine-1-phosphate (GlcN-1-P) to produce N-acetylglucosamine-1-phosphate (GlcNAc-1-P), which is converted into UDP-GlcNAc by the transfer of uridine 5-monophosphate (from uridine 5-triphosphate), a reaction catalyzed by the N-terminal domain. The polypeptide is Bifunctional protein GlmU (Lactococcus lactis subsp. cremoris (strain SK11)).